The following is a 291-amino-acid chain: Lipoyl synthase (291 aa).

C33, C38, C44, C59, C63, C66, and S274 together coordinate [4Fe-4S] cluster. Positions 45–263 constitute a Radical SAM core domain; that stretch reads WGEGTATFLI…REAAEAMGFK (219 aa).

This sequence belongs to the radical SAM superfamily. Lipoyl synthase family. It depends on [4Fe-4S] cluster as a cofactor.

The protein localises to the cytoplasm. It carries out the reaction [[Fe-S] cluster scaffold protein carrying a second [4Fe-4S](2+) cluster] + N(6)-octanoyl-L-lysyl-[protein] + 2 oxidized [2Fe-2S]-[ferredoxin] + 2 S-adenosyl-L-methionine + 4 H(+) = [[Fe-S] cluster scaffold protein] + N(6)-[(R)-dihydrolipoyl]-L-lysyl-[protein] + 4 Fe(3+) + 2 hydrogen sulfide + 2 5'-deoxyadenosine + 2 L-methionine + 2 reduced [2Fe-2S]-[ferredoxin]. The protein operates within protein modification; protein lipoylation via endogenous pathway; protein N(6)-(lipoyl)lysine from octanoyl-[acyl-carrier-protein]: step 2/2. Catalyzes the radical-mediated insertion of two sulfur atoms into the C-6 and C-8 positions of the octanoyl moiety bound to the lipoyl domains of lipoate-dependent enzymes, thereby converting the octanoylated domains into lipoylated derivatives. This chain is Lipoyl synthase, found in Pyrobaculum calidifontis (strain DSM 21063 / JCM 11548 / VA1).